Consider the following 452-residue polypeptide: UDP-N-acetylmuramoylalanine--D-glutamate ligase (452 aa).

Position 115 to 121 (115 to 121 (GTNGKTT)) interacts with ATP.

It belongs to the MurCDEF family.

The protein localises to the cytoplasm. The enzyme catalyses UDP-N-acetyl-alpha-D-muramoyl-L-alanine + D-glutamate + ATP = UDP-N-acetyl-alpha-D-muramoyl-L-alanyl-D-glutamate + ADP + phosphate + H(+). It participates in cell wall biogenesis; peptidoglycan biosynthesis. In terms of biological role, cell wall formation. Catalyzes the addition of glutamate to the nucleotide precursor UDP-N-acetylmuramoyl-L-alanine (UMA). The polypeptide is UDP-N-acetylmuramoylalanine--D-glutamate ligase (Citrifermentans bemidjiense (strain ATCC BAA-1014 / DSM 16622 / JCM 12645 / Bem) (Geobacter bemidjiensis)).